The primary structure comprises 603 residues: Podocalyxin-like protein 2 (603 aa).

Positions 1–28 are cleaved as a signal peptide; that stretch reads MARPLRAARLPPPLLLLLAAGASLGAYA. Residues 29–499 are Extracellular-facing; sequence VGVDEPGPEG…ATQVRSDYGT (471 aa). The interval 53 to 92 is disordered; that stretch reads FEPLDSEEPSEAMGLDAGLAPGSGFPSEDSEESRLLQPPQ. A glycan (O-linked (Xyl...) (chondroitin sulfate) serine) is linked at Ser-75. Tyr-93 carries the post-translational modification Sulfotyrosine. An N-linked (GlcNAc...) asparagine glycan is attached at Asn-101. At Tyr-113 the chain carries Sulfotyrosine. Residues 124–368 are disordered; that stretch reads SMEDPGQAPD…LEGQAAEAHS (245 aa). Acidic residues predominate over residues 156 to 187; it reads QEEEEEEEEEEEEREEEEREKEAEEEEEEEEL. Low complexity predominate over residues 196–216; it reads ATAQAHAPSPSTSSSTSSQSP. Polar residues-rich tracts occupy residues 240–266, 302–314, and 339–349; these read VKPTLSVPSVTPSTVAPGVQNYSQESG, ALPSSSLPQTVPP, and DTESTPSSATW. N-linked (GlcNAc...) asparagine glycosylation occurs at Asn-260. Asn-394 is a glycosylation site (N-linked (GlcNAc...) asparagine). The helical transmembrane segment at 500–520 threads the bilayer; that stretch reads LFVVLVIIGVICFIIIVLGLL. Residues 521-603 lie on the Cytoplasmic side of the membrane; that stretch reads YNCWQRRMPK…SDVFEEDTHL (83 aa). The segment covering 558 to 570 has biased composition (polar residues); sequence DSQSEMQEKQPSL. The interval 558–603 is disordered; the sequence is DSQSEMQEKQPSLNGGAINGPSSWSALMGSKRDPEDSDVFEEDTHL. Phosphoserine occurs at positions 569 and 594. The segment covering 592 to 603 has biased composition (acidic residues); the sequence is EDSDVFEEDTHL.

The protein belongs to the podocalyxin family. Homodimer; disulfide-linked. Interacts with SELL, SELE and SELP. In terms of processing, glycosylated; contains chondroitin sulfate. Displays sialylated O-linked oligosaccharides. Post-translationally, sulfation is necessary for interaction with SELL. Sialylated O-linked oligosaccharides are necessary for interaction with SELL, SELE and SELP.

Its subcellular location is the membrane. In terms of biological role, acts as a ligand for vascular selectins. Mediates rapid rolling of leukocytes over vascular surfaces through high affinity divalent cation-dependent interactions with E-, P- and L-selectins. This is Podocalyxin-like protein 2 (Podxl2) from Mus musculus (Mouse).